A 365-amino-acid polypeptide reads, in one-letter code: TD and POZ domain-containing protein 1-like (365 aa).

Residues 19 to 149 (KFCYKWTISN…EDQLTICCKV (131 aa)) enclose the MATH domain. Residues 188-255 (TDCCLLVAGH…IYTGKAPYLH (68 aa)) form the BTB domain.

Belongs to the Tdpoz family.

The polypeptide is TD and POZ domain-containing protein 1-like (Mus musculus (Mouse)).